The sequence spans 201 residues: Large ribosomal subunit protein uL4 (201 aa).

The tract at residues 46-71 (QKTRAEITGTGKKPWRQKGTGRARAG) is disordered.

It belongs to the universal ribosomal protein uL4 family. In terms of assembly, part of the 50S ribosomal subunit.

Functionally, one of the primary rRNA binding proteins, this protein initially binds near the 5'-end of the 23S rRNA. It is important during the early stages of 50S assembly. It makes multiple contacts with different domains of the 23S rRNA in the assembled 50S subunit and ribosome. In terms of biological role, forms part of the polypeptide exit tunnel. This Shewanella amazonensis (strain ATCC BAA-1098 / SB2B) protein is Large ribosomal subunit protein uL4.